A 153-amino-acid polypeptide reads, in one-letter code: Probable succinate transporter subunit YjjB (153 aa).

A run of 4 helical transmembrane segments spans residues 7 to 27 (WALL…AMVF), 51 to 71 (MIHF…MIGI), 83 to 103 (VFTV…TAMI), and 125 to 145 (FLKA…PGLW).

This sequence belongs to the ThrE exporter (TC 2.A.79) family. As to quaternary structure, the transporter is composed of YjjB and YjjP.

Its subcellular location is the cell inner membrane. In terms of biological role, involved in succinate export with YjjP. Both proteins are required for export. This Yersinia pestis bv. Antiqua (strain Antiqua) protein is Probable succinate transporter subunit YjjB.